Reading from the N-terminus, the 459-residue chain is MGIGFKGRKTLLRELVKYMVTLCISLVVLALLYIFINTIAMNTGFSHPANYNEREAEKLAPKLETIDKVTADMIPDTMSYAILNKETKQKTAGTIKEKDLQLVKKKIEKKPYVNYKQKGYLVIERNNEYCVLQYSLRADFSSPLLRKYLPNYELTSICILIILLIIVISIITTYFANRLRKHFETLNVITRYIKEQNLQFTPEFTHIKEFDDVIDSLIEMRDALQSSLEALWRLEKNKKEQIGALAHEIKIPITIIKGNAELLSLSMQNEEQAEYTKYILGAGNQIEQYIYQLIHLSKTEDALTIHLEKASVDELTETLVKDISAYKGNKNINISFKKENLMKEAKIDWQLLHRALLNILTNAVDYTPEGGTVSVHAECDSEIFYFFVKDTGNGFSEMGLKKATELFYMDDKSRHSKGHYGMGLTFAKNAVNLHNGELTLGNTIAGGAEVRVKIPLRNE.

The Cytoplasmic portion of the chain corresponds to methionine 1–tyrosine 18. The helical transmembrane segment at methionine 19–isoleucine 39 threads the bilayer. The Extracellular portion of the chain corresponds to alanine 40–threonine 155. Residues serine 156–alanine 176 traverse the membrane as a helical segment. Topologically, residues asparagine 177 to glutamate 459 are cytoplasmic. The region spanning alanine 244–asparagine 458 is the Histidine kinase domain. Histidine 247 carries the post-translational modification Phosphohistidine; by autocatalysis.

It localises to the cell membrane. It catalyses the reaction ATP + protein L-histidine = ADP + protein N-phospho-L-histidine.. Functionally, member of the two-component regulatory system SpaK/SpaR involved in the regulation of the biosynthesis of lantibiotic subtilin. SpaK may function as a membrane-associated protein kinase that phosphorylates SpaR in response to environmental signals. In Bacillus subtilis, this protein is Sensor histidine kinase SpaK (spaK).